A 245-amino-acid chain; its full sequence is tRNA pseudouridine synthase A (245 aa).

Asp52 (nucleophile) is an active-site residue. Tyr111 is a substrate binding site.

Belongs to the tRNA pseudouridine synthase TruA family. In terms of assembly, homodimer.

The catalysed reaction is uridine(38/39/40) in tRNA = pseudouridine(38/39/40) in tRNA. Functionally, formation of pseudouridine at positions 38, 39 and 40 in the anticodon stem and loop of transfer RNAs. The sequence is that of tRNA pseudouridine synthase A from Thermotoga neapolitana (strain ATCC 49049 / DSM 4359 / NBRC 107923 / NS-E).